Consider the following 252-residue polypeptide: Major prion protein (252 aa).

Residues 1-28 (MAHLGYWMLLLFVATWSDVGLCKKRPKP) form the signal peptide. Positions 23 to 229 (KKRPKPGGGW…ESQAAYQRAA (207 aa)) are interaction with GRB2, ERI3 and SYN1. A disordered region spans residues 26–109 (PKPGGGWNTG…KPSKPKTSMK (84 aa)). A run of 5 repeats spans residues 51-59 (PPQGGGWGQ), 60-67 (PHGGGWGQ), 68-75 (PHGGGWGQ), 76-83 (PHGGGWGQ), and 84-92 (PHGGGWGQG). The segment at 51–92 (PPQGGGWGQPHGGGWGQPHGGGWGQPHGGGWGQPHGGGWGQG) is 5 X 8 AA tandem repeats of P-H-G-G-G-W-G-Q. Residues 53 to 93 (QGGGWGQPHGGGWGQPHGGGWGQPHGGGWGQPHGGGWGQGG) show a composition bias toward gly residues. 12 residues coordinate Cu(2+): His-61, Gly-62, Gly-63, His-69, Gly-70, Gly-71, His-77, Gly-78, Gly-79, His-85, Gly-86, and Gly-87. An intrachain disulfide couples Cys-178 to Cys-213. 2 N-linked (GlcNAc...) asparagine glycosylation sites follow: Asn-180 and Asn-196. A lipid anchor (GPI-anchor amidated alanine) is attached at Ala-229. Positions 230–252 (GVLLFSSPPVILLISFLIFLIVG) are cleaved as a propeptide — removed in mature form.

Belongs to the prion family. As to quaternary structure, monomer and homodimer. Has a tendency to aggregate into amyloid fibrils containing a cross-beta spine, formed by a steric zipper of superposed beta-strands. Soluble oligomers may represent an intermediate stage on the path to fibril formation. Copper binding may promote oligomerization. Interacts with GRB2, APP, ERI3/PRNPIP and SYN1. Mislocalized cytosolically exposed PrP interacts with MGRN1; this interaction alters MGRN1 subcellular location and causes lysosomal enlargement. Interacts with KIAA1191.

Its subcellular location is the cell membrane. The protein resides in the golgi apparatus. Its function is as follows. Its primary physiological function is unclear. Has cytoprotective activity against internal or environmental stresses. May play a role in neuronal development and synaptic plasticity. May be required for neuronal myelin sheath maintenance. May play a role in iron uptake and iron homeostasis. Soluble oligomers are toxic to cultured neuroblastoma cells and induce apoptosis (in vitro). Association with GPC1 (via its heparan sulfate chains) targets PRNP to lipid rafts. Also provides Cu(2+) or Zn(2+) for the ascorbate-mediated GPC1 deaminase degradation of its heparan sulfate side chains. This is Major prion protein (PRNP) from Oryctolagus cuniculus (Rabbit).